We begin with the raw amino-acid sequence, 258 residues long: 5'-nucleotidase SurE (258 aa).

Positions 14, 15, 45, and 101 each coordinate a divalent metal cation.

Belongs to the SurE nucleotidase family. The cofactor is a divalent metal cation.

It localises to the cytoplasm. It catalyses the reaction a ribonucleoside 5'-phosphate + H2O = a ribonucleoside + phosphate. Functionally, nucleotidase that shows phosphatase activity on nucleoside 5'-monophosphates. This is 5'-nucleotidase SurE from Chlorobium phaeobacteroides (strain DSM 266 / SMG 266 / 2430).